A 226-amino-acid polypeptide reads, in one-letter code: PKHD-type hydroxylase Bpet2704 (226 aa).

The Fe2OG dioxygenase domain occupies 78-178 (KIFPPLFNRY…RISAFFWMQS (101 aa)). Fe cation contacts are provided by histidine 96, aspartate 98, and histidine 159. Arginine 169 contributes to the 2-oxoglutarate binding site.

Fe(2+) is required as a cofactor. L-ascorbate serves as cofactor.

This chain is PKHD-type hydroxylase Bpet2704, found in Bordetella petrii (strain ATCC BAA-461 / DSM 12804 / CCUG 43448).